The chain runs to 102 residues: Small ribosomal subunit protein uS10 (102 aa).

The protein belongs to the universal ribosomal protein uS10 family. Part of the 30S ribosomal subunit.

Its function is as follows. Involved in the binding of tRNA to the ribosomes. The protein is Small ribosomal subunit protein uS10 of Streptococcus pyogenes serotype M3 (strain SSI-1).